The sequence spans 228 residues: Ephrin-A5b (228 aa).

The signal sequence occupies residues Met1–Ser20. The region spanning Ala29–Asn162 is the Ephrin RBD domain. Asn37 is a glycosylation site (N-linked (GlcNAc...) asparagine). Intrachain disulfides connect Cys62-Cys102 and Cys90-Cys151. Positions Leu184–Arg198 are enriched in basic and acidic residues. The disordered stretch occupies residues Leu184–Gly205. Ser204 carries the GPI-anchor amidated serine lipid modification. Residues Gly205–Leu228 constitute a propeptide, removed in mature form.

This sequence belongs to the ephrin family. As to expression, widespread expression in the embryo.

The protein resides in the cell membrane. In terms of biological role, cell surface GPI-bound ligand for Eph receptors, a family of receptor tyrosine kinases which are crucial for migration, repulsion and adhesion during neuronal, vascular and epithelial development. Binds promiscuously Eph receptors residing on adjacent cells, leading to contact-dependent bidirectional signaling into neighboring cells. Induces compartmentalized signaling within a caveolae-like membrane microdomain when bound to the extracellular domain of its cognate receptor. This signaling event requires the activity of the Fyn tyrosine kinase. Activates the epha3 receptor to regulate cell-cell adhesion and cytoskeletal organization. With the receptor epha2 may regulate lens fiber cells shape and interactions and be important for lens transparency maintenance. May function actively to stimulate axon fasciculation. Controls axon growth and may be involved in the creation of the retino-tectal map. The polypeptide is Ephrin-A5b (efna5b) (Danio rerio (Zebrafish)).